The chain runs to 269 residues: Eukaryotic translation initiation factor 3 subunit G (269 aa).

The tract at residues 140-181 (AIGGGDMSAQGGSGSGRYVPPSLRAGARDPSSNAYQDQRERD) is disordered. The segment covering 141–154 (IGGGDMSAQGGSGS) has biased composition (gly residues). At serine 161 the chain carries Phosphoserine. Residues 184-263 (KTIRLTQVNE…FMLHAEWSKP (80 aa)) form the RRM domain.

Belongs to the eIF-3 subunit G family. Component of the eukaryotic translation initiation factor 3 (eIF-3) complex.

The protein localises to the cytoplasm. Functionally, RNA-binding component of the eukaryotic translation initiation factor 3 (eIF-3) complex, which is involved in protein synthesis of a specialized repertoire of mRNAs and, together with other initiation factors, stimulates binding of mRNA and methionyl-tRNAi to the 40S ribosome. The eIF-3 complex specifically targets and initiates translation of a subset of mRNAs involved in cell proliferation. This subunit can bind 18S rRNA. The chain is Eukaryotic translation initiation factor 3 subunit G from Kluyveromyces lactis (strain ATCC 8585 / CBS 2359 / DSM 70799 / NBRC 1267 / NRRL Y-1140 / WM37) (Yeast).